The primary structure comprises 553 residues: Phosphoenolpyruvate carboxykinase (ATP) (553 aa).

The segment at 1–22 is disordered; it reads MAPPTAVGSSINFEGHPTIKST. 255 to 262 lines the ATP pocket; the sequence is GLSGTGKT.

It belongs to the phosphoenolpyruvate carboxykinase (ATP) family.

The enzyme catalyses oxaloacetate + ATP = phosphoenolpyruvate + ADP + CO2. It functions in the pathway carbohydrate biosynthesis; gluconeogenesis. This Candida albicans (Yeast) protein is Phosphoenolpyruvate carboxykinase (ATP) (PCK1).